Consider the following 364-residue polypeptide: Heavy metal-associated isoprenylated plant protein 35 (364 aa).

The span at 1–12 shows a compositional bias: basic and acidic residues; it reads MATDEMKSETKK. The interval 1–33 is disordered; the sequence is MATDEMKSETKKTEHKQKQSTQIKQDLPPPTIP. Residues 39 to 102 enclose the HMA domain; it reads YKSCTLKVSI…KLNKAGKNAE (64 aa). Cysteine 50 and cysteine 53 together coordinate a metal cation. The segment at 101–265 is disordered; the sequence is AEQLPEIPDP…PPTATDYDRP (165 aa). Residues 111-122 show a composition bias toward basic and acidic residues; that stretch reads VDNKPKPVDPKE. The span at 134-144 shows a compositional bias: polar residues; that stretch reads QITNEATSSGI. 2 stretches are compositionally biased toward basic and acidic residues: residues 154 to 169 and 180 to 198; these read ECDKPESEKPVDEKCL and VKEEKKDVLKEKDSGKEES. Positions 237–253 are enriched in polar residues; it reads SLATTNNPTDGPARTQS. Cysteine 361 is modified (cysteine methyl ester). A lipid anchor (S-farnesyl cysteine) is attached at cysteine 361. A propeptide spans 362-364 (removed in mature form); sequence AIM.

It belongs to the HIPP family.

Its function is as follows. Heavy-metal-binding protein. In Arabidopsis thaliana (Mouse-ear cress), this protein is Heavy metal-associated isoprenylated plant protein 35.